The sequence spans 377 residues: MQVSEITHRTKTRPVKVGPLTIGGNNEVVIQSMTTTKTHDVEATVAEINRLAEAGCQIVRVACPDERAANAIADIKKRISIPLVVDIHFDYKLALKAIEGGADKIRINPGNIGRREKVEAVVKAAKDKGIPIRIGVNAGSLEKRILEKYGYPTADGMVESALHHIKILEDLDFHDIIVSMKASDVNLAIEAYEKAAKAFDYPLHLGITESGTLFAGTVKSAAGLGAILSKGIGNTMRISLSADPVEEVKVARELLKSFGLASNAATLISCPTCGRIEIDLISIANEVEEYISKIKAPIKVAVLGCAVNGPGEAREADIGIAGARGEGLLFRKGKIVRKVPEETMVEELKKEIDILAEEHYAKLEAEKAKLKEETQKA.

Positions 270, 273, 305, and 312 each coordinate [4Fe-4S] cluster.

The protein belongs to the IspG family. [4Fe-4S] cluster serves as cofactor.

It carries out the reaction (2E)-4-hydroxy-3-methylbut-2-enyl diphosphate + oxidized [flavodoxin] + H2O + 2 H(+) = 2-C-methyl-D-erythritol 2,4-cyclic diphosphate + reduced [flavodoxin]. Its pathway is isoprenoid biosynthesis; isopentenyl diphosphate biosynthesis via DXP pathway; isopentenyl diphosphate from 1-deoxy-D-xylulose 5-phosphate: step 5/6. In terms of biological role, converts 2C-methyl-D-erythritol 2,4-cyclodiphosphate (ME-2,4cPP) into 1-hydroxy-2-methyl-2-(E)-butenyl 4-diphosphate. This Bacillus subtilis (strain 168) protein is 4-hydroxy-3-methylbut-2-en-1-yl diphosphate synthase (flavodoxin).